A 369-amino-acid polypeptide reads, in one-letter code: MDQNCTPLHDLCIAAGGRMVSFAGWEMPVQFSGLMAEHKAVRSDSGMFDISHMGVLRIEGANPKDALQQLVPSDLHRIGPGQACYSVLLNEQGGIIDDLIIYDLGPSLLDESHETLLVVINAACAETDTAWIRQHLERADLQVLDEKKDGVLLALQGPKAIGLLERLSGSDLSELPRFGHCSLNIHGLQAPVFTARTGYTGEDGVELLLKADDGRQLWQLLLEEGVTPCGLGARDTLRLEAAMHLYGQDMDAATTPFEAGLGWLVHLEMPALFIGRQALEQAAEQGPSKRLVGLKLQGRSIARHDYPVIHNGATVGVVTSGSWSPTLQEPIALASLPPALAKLGTELSVEIRGQLQPATVVKRPFYRRS.

This sequence belongs to the GcvT family. As to quaternary structure, the glycine cleavage system is composed of four proteins: P, T, L and H.

It carries out the reaction N(6)-[(R)-S(8)-aminomethyldihydrolipoyl]-L-lysyl-[protein] + (6S)-5,6,7,8-tetrahydrofolate = N(6)-[(R)-dihydrolipoyl]-L-lysyl-[protein] + (6R)-5,10-methylene-5,6,7,8-tetrahydrofolate + NH4(+). In terms of biological role, the glycine cleavage system catalyzes the degradation of glycine. The sequence is that of Aminomethyltransferase from Synechococcus sp. (strain CC9311).